Consider the following 524-residue polypeptide: GMP synthase [glutamine-hydrolyzing] (524 aa).

Residues 8-206 form the Glutamine amidotransferase type-1 domain; that stretch reads RILILDFGSQ…IYDICGCEAL (199 aa). Cys85 (nucleophile) is an active-site residue. Catalysis depends on residues His180 and Glu182. The GMPS ATP-PPase domain maps to 207–399; sequence WEPRHIIAKS…LGLPFELVYR (193 aa). Residue 234–240 participates in ATP binding; the sequence is SGGVDSS.

Homodimer.

The catalysed reaction is XMP + L-glutamine + ATP + H2O = GMP + L-glutamate + AMP + diphosphate + 2 H(+). The protein operates within purine metabolism; GMP biosynthesis; GMP from XMP (L-Gln route): step 1/1. Its function is as follows. Catalyzes the synthesis of GMP from XMP. This Nitrosococcus oceani (strain ATCC 19707 / BCRC 17464 / JCM 30415 / NCIMB 11848 / C-107) protein is GMP synthase [glutamine-hydrolyzing].